The following is a 121-amino-acid chain: UPF0102 protein BDI_2565 (121 aa).

Belongs to the UPF0102 family.

The sequence is that of UPF0102 protein BDI_2565 from Parabacteroides distasonis (strain ATCC 8503 / DSM 20701 / CIP 104284 / JCM 5825 / NCTC 11152).